We begin with the raw amino-acid sequence, 693 residues long: Polyribonucleotide nucleotidyltransferase (693 aa).

Residues aspartate 489 and aspartate 495 each contribute to the Mg(2+) site. A KH domain is found at 556–615 (PQIHVMNINPAKIKDVVGRGGATVKGIVEKTGAQIDTSDSGEVKVFAKDKKSMDMAVAMI). An S1 motif domain is found at 625 to 693 (GQVYKGKIVK…GRVKLSLVAR (69 aa)).

Belongs to the polyribonucleotide nucleotidyltransferase family. As to quaternary structure, component of the RNA degradosome, which is a multiprotein complex involved in RNA processing and mRNA degradation. The cofactor is Mg(2+).

It localises to the cytoplasm. The catalysed reaction is RNA(n+1) + phosphate = RNA(n) + a ribonucleoside 5'-diphosphate. Involved in mRNA degradation. Catalyzes the phosphorolysis of single-stranded polyribonucleotides processively in the 3'- to 5'-direction. This is Polyribonucleotide nucleotidyltransferase from Francisella tularensis subsp. tularensis (strain WY96-3418).